Here is a 226-residue protein sequence, read N- to C-terminus: Uracil-DNA glycosylase (226 aa).

The Proton acceptor role is filled by Asp65.

The protein belongs to the uracil-DNA glycosylase (UDG) superfamily. UNG family.

The protein localises to the cytoplasm. It catalyses the reaction Hydrolyzes single-stranded DNA or mismatched double-stranded DNA and polynucleotides, releasing free uracil.. In terms of biological role, excises uracil residues from the DNA which can arise as a result of misincorporation of dUMP residues by DNA polymerase or due to deamination of cytosine. The protein is Uracil-DNA glycosylase of Bacillus pumilus (strain SAFR-032).